The primary structure comprises 109 residues: Small ribosomal subunit protein eS25 (109 aa).

Residues 1–36 (MGGASKKPISTVEKRMKKMAEEQQKKQQKRATTKTG) are disordered. Residues 12-25 (VEKRMKKMAEEQQK) show a composition bias toward basic and acidic residues.

This sequence belongs to the eukaryotic ribosomal protein eS25 family.

This chain is Small ribosomal subunit protein eS25 (rps25e), found in Sulfurisphaera tokodaii (strain DSM 16993 / JCM 10545 / NBRC 100140 / 7) (Sulfolobus tokodaii).